Consider the following 230-residue polypeptide: DNA repair protein rdl1 (230 aa).

In terms of assembly, interacts with rlp1 and sws1.

It localises to the cytoplasm. The protein localises to the nucleus. Its function is as follows. Involved in homologous recombination where it functions at an early stage of recombination in a pre-recombinogenic complex with rlp1 and sws1. Also has a role at a later stage of recombination in association with the rhp55-rhp57 complex. This chain is DNA repair protein rdl1 (rdl1), found in Schizosaccharomyces pombe (strain 972 / ATCC 24843) (Fission yeast).